Consider the following 160-residue polypeptide: Phosphopantetheine adenylyltransferase (160 aa).

Ser9 serves as a coordination point for substrate. ATP contacts are provided by residues 9–10 (SL) and His17. Residues Lys41, Leu74, and Lys88 each contribute to the substrate site. ATP contacts are provided by residues 89–91 (GIR), Glu99, and 123–129 (YLHLSST).

Belongs to the bacterial CoaD family. Homohexamer. The cofactor is Mg(2+).

It localises to the cytoplasm. It catalyses the reaction (R)-4'-phosphopantetheine + ATP + H(+) = 3'-dephospho-CoA + diphosphate. It participates in cofactor biosynthesis; coenzyme A biosynthesis; CoA from (R)-pantothenate: step 4/5. Reversibly transfers an adenylyl group from ATP to 4'-phosphopantetheine, yielding dephospho-CoA (dPCoA) and pyrophosphate. The chain is Phosphopantetheine adenylyltransferase from Renibacterium salmoninarum (strain ATCC 33209 / DSM 20767 / JCM 11484 / NBRC 15589 / NCIMB 2235).